A 314-amino-acid polypeptide reads, in one-letter code: Mitochondrial 2-oxoglutarate/malate carrier protein (314 aa).

Alanine 2 bears the N-acetylalanine mark. Serine 6 is subject to Phosphoserine. 3 Solcar repeats span residues 23-108 (VKFL…LFER), 117-208 (PGFL…SKQF), and 217-306 (DNIL…MNKA). A helical transmembrane segment spans residues 24-42 (KFLFGGLAGMGATVFVQPL). Position 57 is an N6-succinyllysine (lysine 57). Lysine 73 is subject to N6-acetyllysine. The chain crosses the membrane as a helical span at residues 83-101 (GLSAGLLRQATYTTTRLGI). The residue at position 102 (tyrosine 102) is a Phosphotyrosine. The next 3 helical transmembrane spans lie at 119-140 (FLLKALIGMTAGATGAFVGPPA), 183-202 (GCIPTMARAVVVNAAQLASY), and 222-240 (HFCAIMISGLVTTAASMPV). Lysine 256 is subject to N6-acetyllysine. A helical membrane pass occupies residues 281-300 (GFTPYYARLGPHTVLTFIFL).

This sequence belongs to the mitochondrial carrier (TC 2.A.29) family. Interacts with SMIM26. Expressed in liver, heart and brain.

It localises to the mitochondrion inner membrane. The catalysed reaction is (S)-malate(in) + 2-oxoglutarate(out) = (S)-malate(out) + 2-oxoglutarate(in). It catalyses the reaction malonate(in) + 2-oxoglutarate(out) = malonate(out) + 2-oxoglutarate(in). It carries out the reaction succinate(in) + 2-oxoglutarate(out) = succinate(out) + 2-oxoglutarate(in). The enzyme catalyses maleate(in) + 2-oxoglutarate(out) = maleate(out) + 2-oxoglutarate(in). The catalysed reaction is oxaloacetate(in) + 2-oxoglutarate(out) = oxaloacetate(out) + 2-oxoglutarate(in). Functionally, catalyzes the transport of 2-oxoglutarate (alpha-oxoglutarate) across the inner mitochondrial membrane in an electroneutral exchange for malate. Can also exchange 2-oxoglutarate for other dicarboxylic acids such as malonate, succinate, maleate and oxaloacetate, although with lower affinity. Contributes to several metabolic processes, including the malate-aspartate shuttle, the oxoglutarate/isocitrate shuttle, in gluconeogenesis from lactate, and in nitrogen metabolism. Maintains mitochondrial fusion and fission events, and the organization and morphology of cristae. Involved in the regulation of apoptosis. Helps protect from cytotoxic-induced apoptosis by modulating glutathione levels in mitochondria. In Rattus norvegicus (Rat), this protein is Mitochondrial 2-oxoglutarate/malate carrier protein (Slc25a11).